We begin with the raw amino-acid sequence, 245 residues long: Small ribosomal subunit protein uS2 (245 aa).

Belongs to the universal ribosomal protein uS2 family.

This Dehalococcoides mccartyi (strain CBDB1) protein is Small ribosomal subunit protein uS2.